A 338-amino-acid chain; its full sequence is Anthocyanidin reductase ((2S)-flavan-3-ol-forming) (338 aa).

Residues 18–21, K48, 87–90, and Y168 each bind NADP(+); these read TGFV and VATP.

Belongs to the NAD(P)-dependent epimerase/dehydratase family. Dihydroflavonol-4-reductase subfamily. In terms of tissue distribution, expressed in seeds, grape skins, flowers and leaves.

The catalysed reaction is a (2S,3R)-flavan-3-ol + 2 NADP(+) = an anthocyanidin with a 3-hydroxy group + 2 NADPH + 2 H(+). It catalyses the reaction a (2S,3S)-flavan-3-ol + 2 NADP(+) = an anthocyanidin with a 3-hydroxy group + 2 NADPH + 2 H(+). Its pathway is secondary metabolite biosynthesis; flavonoid biosynthesis. Its activity is regulated as follows. Inhibited at NaCl concentrations higher than 200 mM. Functionally, produces the terminal flavan-3-ol monomers required for the formation of proanthocyanidins or condensed tannins in leaves and flowers, as well as in the skin and seeds of developing berries. Behaves as a reductase and as a C-3 epimerase. Catalyzes the double reduction of anthocyanidins, producing a mixture of (2S,3S)- and (2S,3R)-flavan-3-ols. The enzyme catalyzes sequential hydride transfers to C-2 and C-4, respectively and epimerization at C-3 is achieved by tautomerization that occurs between the two hydride transfers. Converts cyanidin, pelargonidin and delphinidin into catechin and epicatechin, afzelechin and epiafzelechin, and gallocatechin and epigallocatechin respectively. In Vitis vinifera (Grape), this protein is Anthocyanidin reductase ((2S)-flavan-3-ol-forming).